Here is a 359-residue protein sequence, read N- to C-terminus: UPF0283 membrane protein R01807 (359 aa).

Helical transmembrane passes span Phe-76–Ile-96 and Trp-109–Val-129.

This sequence belongs to the UPF0283 family.

Its subcellular location is the cell inner membrane. The protein is UPF0283 membrane protein R01807 of Rhizobium meliloti (strain 1021) (Ensifer meliloti).